A 246-amino-acid chain; its full sequence is uncharacterized protein (246 aa).

10 to 34 (VITGASSGIGEETVNLLSENGAKLV) is an NADP(+) binding site. Residue Ser-140 participates in substrate binding. Tyr-153 (proton acceptor) is an active-site residue.

It belongs to the short-chain dehydrogenases/reductases (SDR) family.

This is an uncharacterized protein from Staphylococcus saprophyticus subsp. saprophyticus (strain ATCC 15305 / DSM 20229 / NCIMB 8711 / NCTC 7292 / S-41).